A 137-amino-acid chain; its full sequence is Small ribosomal subunit protein uS12 (137 aa).

Position 89 is a 3-methylthioaspartic acid (Asp89). Residues 101 to 137 (SLDTSGVADRKQSRSKYGAKQPKAGAPAAPVKGKGKK) form a disordered region. Over residues 116 to 137 (KYGAKQPKAGAPAAPVKGKGKK) the composition is skewed to low complexity.

It belongs to the universal ribosomal protein uS12 family. Part of the 30S ribosomal subunit. Contacts proteins S8 and S17. May interact with IF1 in the 30S initiation complex.

Functionally, with S4 and S5 plays an important role in translational accuracy. In terms of biological role, interacts with and stabilizes bases of the 16S rRNA that are involved in tRNA selection in the A site and with the mRNA backbone. Located at the interface of the 30S and 50S subunits, it traverses the body of the 30S subunit contacting proteins on the other side and probably holding the rRNA structure together. The combined cluster of proteins S8, S12 and S17 appears to hold together the shoulder and platform of the 30S subunit. The sequence is that of Small ribosomal subunit protein uS12 from Chlorobium chlorochromatii (strain CaD3).